We begin with the raw amino-acid sequence, 181 residues long: Inner membrane-spanning protein YciB (181 aa).

5 helical membrane-spanning segments follow: residues 10 to 30, 50 to 70, 80 to 100, 118 to 138, and 148 to 168; these read LVIF…GALI, MHLI…ILHD, IVYA…KPIL, VTWY…YVAF, and FKVF…VFYL.

Belongs to the YciB family.

The protein localises to the cell inner membrane. Functionally, plays a role in cell envelope biogenesis, maintenance of cell envelope integrity and membrane homeostasis. The chain is Inner membrane-spanning protein YciB from Shewanella piezotolerans (strain WP3 / JCM 13877).